Reading from the N-terminus, the 193-residue chain is Major intrinsically disordered NOTCH2-binding receptor 1-like homolog (193 aa).

Position 82 is a phosphoserine (serine 82). A glycan (N-linked (GlcNAc...) asparagine) is linked at asparagine 128. Residues 172–192 (GLILLLVASILVTIVTLSTIF) form a helical membrane-spanning segment.

Belongs to the MINAR family. As to quaternary structure, interacts with NOTCH2. Widely expressed in the cortex and Purkinje cells of cerebellum. Expressed in the inner ear, mainly in the hair cells, spiral ganglia, the spiral limbus, and the stria vascularis.

The protein localises to the lysosome membrane. Its subcellular location is the endoplasmic reticulum membrane. Functionally, binds cholesterol and may regulate the distribution and homeostasis of cholesterol in hair cells. May play a role in angiogenesis. The sequence is that of Major intrinsically disordered NOTCH2-binding receptor 1-like homolog from Mus musculus (Mouse).